The primary structure comprises 542 residues: Formate--tetrahydrofolate ligase (542 aa).

53–60 provides a ligand contact to ATP; that stretch reads TPAGEGKT.

Belongs to the formate--tetrahydrofolate ligase family.

It carries out the reaction (6S)-5,6,7,8-tetrahydrofolate + formate + ATP = (6R)-10-formyltetrahydrofolate + ADP + phosphate. Its pathway is one-carbon metabolism; tetrahydrofolate interconversion. In Thermotoga petrophila (strain ATCC BAA-488 / DSM 13995 / JCM 10881 / RKU-1), this protein is Formate--tetrahydrofolate ligase.